The sequence spans 350 residues: Quinone oxidoreductase-like protein 2 (350 aa).

An N6-acetyllysine modification is found at lysine 36. Position 201 is an N6-succinyllysine (lysine 201). N6-acetyllysine occurs at positions 302 and 328.

This sequence belongs to the zinc-containing alcohol dehydrogenase family. Quinone oxidoreductase subfamily.

This chain is Quinone oxidoreductase-like protein 2, found in Rattus norvegicus (Rat).